The sequence spans 429 residues: Glutamate-1-semialdehyde 2,1-aminomutase 1 (429 aa).

Residue Lys267 is modified to N6-(pyridoxal phosphate)lysine.

The protein belongs to the class-III pyridoxal-phosphate-dependent aminotransferase family. HemL subfamily. As to quaternary structure, homodimer. Pyridoxal 5'-phosphate is required as a cofactor.

The protein localises to the cytoplasm. It catalyses the reaction (S)-4-amino-5-oxopentanoate = 5-aminolevulinate. Its pathway is porphyrin-containing compound metabolism; protoporphyrin-IX biosynthesis; 5-aminolevulinate from L-glutamyl-tRNA(Glu): step 2/2. The protein is Glutamate-1-semialdehyde 2,1-aminomutase 1 of Bacillus velezensis (strain DSM 23117 / BGSC 10A6 / LMG 26770 / FZB42) (Bacillus amyloliquefaciens subsp. plantarum).